The sequence spans 486 residues: Glutamate--tRNA ligase (486 aa).

The short motif at 11–21 (PSPTGFLHIGG) is the 'HIGH' region element. Zn(2+) is bound by residues Cys-108, Cys-110, Cys-136, and His-138. The 'KMSKS' region signature appears at 253–257 (KLSKR). Position 256 (Lys-256) interacts with ATP.

Belongs to the class-I aminoacyl-tRNA synthetase family. Glutamate--tRNA ligase type 1 subfamily. As to quaternary structure, monomer. Zn(2+) is required as a cofactor.

Its subcellular location is the cytoplasm. It carries out the reaction tRNA(Glu) + L-glutamate + ATP = L-glutamyl-tRNA(Glu) + AMP + diphosphate. Its function is as follows. Catalyzes the attachment of glutamate to tRNA(Glu) in a two-step reaction: glutamate is first activated by ATP to form Glu-AMP and then transferred to the acceptor end of tRNA(Glu). The polypeptide is Glutamate--tRNA ligase (Lysinibacillus sphaericus (strain C3-41)).